The sequence spans 128 residues: Sulfurtransferase TusD (128 aa).

Catalysis depends on Cys78, which acts as the Cysteine persulfide intermediate.

The protein belongs to the DsrE/TusD family. In terms of assembly, heterohexamer, formed by a dimer of trimers. The hexameric TusBCD complex contains 2 copies each of TusB, TusC and TusD. The TusBCD complex interacts with TusE.

The protein resides in the cytoplasm. Its function is as follows. Part of a sulfur-relay system required for 2-thiolation of 5-methylaminomethyl-2-thiouridine (mnm(5)s(2)U) at tRNA wobble positions. Accepts sulfur from TusA and transfers it in turn to TusE. The chain is Sulfurtransferase TusD from Escherichia coli O157:H7.